We begin with the raw amino-acid sequence, 335 residues long: L-lactate dehydrogenase B chain (335 aa).

NAD(+) contacts are provided by residues 29–57 and Arg-99; that span reads GQVGMACAISILEKGLCDELALVDVVEDK. Residues Arg-106, Asn-138, and Arg-169 each contribute to the substrate site. Asn-138 is an NAD(+) binding site. The Proton acceptor role is filled by His-193. Thr-248 is a binding site for substrate.

This sequence belongs to the LDH/MDH superfamily. LDH family. As to quaternary structure, homotetramer.

It is found in the cytoplasm. It carries out the reaction (S)-lactate + NAD(+) = pyruvate + NADH + H(+). Its pathway is fermentation; pyruvate fermentation to lactate; (S)-lactate from pyruvate: step 1/1. Functionally, interconverts simultaneously and stereospecifically pyruvate and lactate with concomitant interconversion of NADH and NAD(+). This chain is L-lactate dehydrogenase B chain (LDHB), found in Sceloporus undulatus (Eastern fence lizard).